Reading from the N-terminus, the 58-residue chain is Pepsin-1 (58 aa).

The propeptide at 1 to 41 is activation peptide; it reads LLQVPLEKGQSAREYLQEQGLWEQYRLKYPYNPMAKFDPSF.

It belongs to the peptidase A1 family.

The protein is Pepsin-1 of Thunnus orientalis (North Pacific bluefin tuna).